A 255-amino-acid chain; its full sequence is Methanethiol S-methyltransferase (255 aa).

5 helical membrane passes run 16–36 (FVLLYGVFCYFTFLLTCVYAV), 56–76 (LVTALLIDVGLLGIFALQHSV), 99–119 (YVLFSSLALMLVFWQWHPIGI), 131–151 (IIFYSLFALGWVIVLVSTFLI), and 191–211 (VGWFLVFWMTPIMTVAHLVFA).

The protein belongs to the nurim family.

The protein resides in the membrane. It catalyses the reaction methanethiol + S-adenosyl-L-methionine = dimethyl sulfide + S-adenosyl-L-homocysteine + H(+). Catalyzes the methylation of methanethiol (MeSH) to yield dimethylsulphide (DMS). This is Methanethiol S-methyltransferase from Crocosphaera subtropica (strain ATCC 51142 / BH68) (Cyanothece sp. (strain ATCC 51142)).